The primary structure comprises 226 residues: UPF0111 protein PH0637 (226 aa).

The protein belongs to the UPF0111 family.

This is UPF0111 protein PH0637 from Pyrococcus horikoshii (strain ATCC 700860 / DSM 12428 / JCM 9974 / NBRC 100139 / OT-3).